We begin with the raw amino-acid sequence, 267 residues long: MATPGASSARDEFVYMAKLAEQAERYEEMVEFMEKVAKAVDKDELTVEERNLLSVAYKNVIGARRASWRIISSIEQKEESRGNDDHVSLIRDYRSKIETELSDICDGILKLLDTILVPAAASGDSKVFYLKMKGDYHRYLAEFKSGQERKDAAEHTLTAYKAAQDIANSELAPTHPIRLGLALNFSVFYYEILNSPDRACNLAKQAFDEAIAELDTLGEESYKDSTLIMQLLRDNLTLWTSDMQDDVADDIKEAAPAAAKPADEQQS.

At alanine 2 the chain carries N-acetylalanine. 2 positions are modified to phosphoserine: serine 72 and serine 195. At threonine 216 the chain carries Phosphothreonine. Serine 267 carries the post-translational modification Phosphoserine.

It belongs to the 14-3-3 family. Interacts with TPK1. Interacts with the isocitrate dehydrogenase IDH3, and malate dehydrogenases MDH1 and MDH2. Interacts with DREB1A and DREB1B in the nucleus. Interacts with CINV1.

The protein resides in the nucleus. The protein localises to the cytoplasm. Is associated with a DNA binding complex that binds to the G box, a well-characterized cis-acting DNA regulatory element found in plant genes. Involved in the regulation of nutrient metabolism. This is 14-3-3-like protein GF14 chi (GRF1) from Arabidopsis thaliana (Mouse-ear cress).